The following is a 260-amino-acid chain: Acetylglutamate kinase (260 aa).

Substrate is bound by residues 41–42, R63, and N156; that span reads GG.

This sequence belongs to the acetylglutamate kinase family. ArgB subfamily.

It localises to the cytoplasm. The catalysed reaction is N-acetyl-L-glutamate + ATP = N-acetyl-L-glutamyl 5-phosphate + ADP. Its pathway is amino-acid biosynthesis; L-arginine biosynthesis; N(2)-acetyl-L-ornithine from L-glutamate: step 2/4. In terms of biological role, catalyzes the ATP-dependent phosphorylation of N-acetyl-L-glutamate. The protein is Acetylglutamate kinase of Halalkalibacterium halodurans (strain ATCC BAA-125 / DSM 18197 / FERM 7344 / JCM 9153 / C-125) (Bacillus halodurans).